A 1183-amino-acid chain; its full sequence is DNA-directed RNA polymerase subunit beta (1183 aa).

The protein belongs to the RNA polymerase beta chain family. As to quaternary structure, the RNAP catalytic core consists of 2 alpha, 1 beta, 1 beta' and 1 omega subunit. When a sigma factor is associated with the core the holoenzyme is formed, which can initiate transcription.

It catalyses the reaction RNA(n) + a ribonucleoside 5'-triphosphate = RNA(n+1) + diphosphate. DNA-dependent RNA polymerase catalyzes the transcription of DNA into RNA using the four ribonucleoside triphosphates as substrates. The sequence is that of DNA-directed RNA polymerase subunit beta from Staphylococcus aureus (strain Mu3 / ATCC 700698).